The chain runs to 179 residues: Signal peptidase complex catalytic subunit SEC11A (179 aa).

Residues 1–16 (MLSLDFLDDVRRMNKR) are Cytoplasmic-facing. The helical; Signal-anchor for type II membrane protein transmembrane segment at 17 to 36 (QLYYQVLNFGMIVSSALMIW) threads the bilayer. Topologically, residues 37–179 (KGLMVITGSE…LGLFVLVHRE (143 aa)) are lumenal. Catalysis depends on charge relay system residues Ser-56, His-96, and Asp-122. Positions 165-176 (AVLFLLGLFVLV) are C-terminal short (CTS) helix.

This sequence belongs to the peptidase S26B family. Component of the signal peptidase complex paralog A (SPC-A) composed of a catalytic subunit SEC11A and three accessory subunits SPCS1, SPCS2 and SPCS3. Within the complex, interacts with SPCS2 and SPCS3. The complex induces a local thinning of the ER membrane which is used to measure the length of the signal peptide (SP) h-region of protein substrates. This ensures the selectivity of the complex towards h-regions shorter than 18-20 amino acids.

It is found in the endoplasmic reticulum membrane. The enzyme catalyses Cleavage of hydrophobic, N-terminal signal or leader sequences from secreted and periplasmic proteins.. Catalytic component of the signal peptidase complex (SPC) which catalyzes the cleavage of N-terminal signal sequences from nascent proteins as they are translocated into the lumen of the endoplasmic reticulum. Specifically cleaves N-terminal signal peptides that contain a hydrophobic alpha-helix (h-region) shorter than 18-20 amino acids. The protein is Signal peptidase complex catalytic subunit SEC11A (SEC11A) of Bos taurus (Bovine).